Reading from the N-terminus, the 292-residue chain is E3 ubiquitin-protein ligase trim-21 (292 aa).

The segment at 6–52 adopts an RING-type zinc-finger fold; the sequence is CEICDDDFSSEEDGDHNPRNLKCSHTLCEGCIKKLLKNGRVVCPFCR. The B box-type zinc finger occupies 90–137; that stretch reads NFPPKCVEHPYNVAEFACIESNCSSKNKLMCQTCEEFGAHKGHAKELL. Residues Cys-95, His-98, Cys-123, and His-129 each coordinate Zn(2+). Positions 152 to 179 form a coiled coil; sequence INQLKLNIQNCTVKKNELEEAVVKSEQL.

This sequence belongs to the TRIM/RBCC family. As to quaternary structure, interacts with E2 ubiquitin-conjugating enzyme ubc-21. Interacts with ced-6; this mediates interaction of trim-21 with ced-1 and is required for ced-1 ubiquitination. Interacts with nck-1; the interaction is required for ced-1 ubiquitination. In early larva, observed mainly in pharyngeal and body wall muscle cells.

The protein localises to the cytoplasm. The enzyme catalyses S-ubiquitinyl-[E2 ubiquitin-conjugating enzyme]-L-cysteine + [acceptor protein]-L-lysine = [E2 ubiquitin-conjugating enzyme]-L-cysteine + N(6)-ubiquitinyl-[acceptor protein]-L-lysine.. It functions in the pathway protein modification; protein ubiquitination. Functionally, E3 ubiquitin-protein ligase which catalyzes 'Lys-48'-linked polyubiquitination of ced-1, promoting its proteasomal degradation to maintain appropriate ced-1 levels for apoptotic cell clearance. Acts together with E2 ubiquitin-conjugating enzyme ubc-21. This chain is E3 ubiquitin-protein ligase trim-21, found in Caenorhabditis elegans.